The following is a 1085-amino-acid chain: RecBCD enzyme subunit RecC (1085 aa).

This sequence belongs to the RecC family. In terms of assembly, heterotrimer of RecB, RecC and RecD. All subunits contribute to DNA-binding.

Functionally, a helicase/nuclease that prepares dsDNA breaks (DSB) for recombinational DNA repair. Binds to DSBs and unwinds DNA via a highly rapid and processive ATP-dependent bidirectional helicase activity. Holoenzyme degrades any linearized DNA that is unable to undergo homologous recombination. In the holoenzyme this subunit recognizes the wild-type Chi sequence, and when added to isolated RecB increases its ATP-dependent helicase processivity. Unlike the case in E.coli, suppresses RecA-dependent homologous recombination, is instead required for single-strand annealing pathway repair of DSB. The polypeptide is RecBCD enzyme subunit RecC (Mycolicibacterium smegmatis (strain ATCC 700084 / mc(2)155) (Mycobacterium smegmatis)).